Reading from the N-terminus, the 412-residue chain is cAMP-dependent protein kinase regulatory subunit (412 aa).

A compositionally biased stretch (polar residues) spans 1–11; the sequence is MSNYSHSSNNP. The tract at residues 1–146 is disordered; that stretch reads MSNYSHSSNN…TPPSHPKSEE (146 aa). Over residues 16-29 the composition is skewed to basic and acidic residues; the sequence is STKEDKPSSFHKIA. The tract at residues 23-159 is dimerization and phosphorylation; sequence SSFHKIAEDE…RLKTAVSNNF (137 aa). 2 stretches are compositionally biased toward polar residues: residues 49–60 and 119–138; these read NADNSAGGNNPL and TSVSAESLNPTSAGSDSWTP. Ser120 is subject to Phosphoserine. 3',5'-cyclic AMP is bound by residues 160-291, Glu238, Arg247, 292-405, Glu359, and Arg368; these read LFSH…EEVP and LLSS…TEYS.

The protein belongs to the cAMP-dependent kinase regulatory chain family. In terms of assembly, tetramer, composed of 2 regulatory (R) and 2 catalytic (C) subunits. In the presence of cAMP it dissociates into 2 active monomeric C subunits and an R dimer.

This chain is cAMP-dependent protein kinase regulatory subunit (pkaR), found in Emericella nidulans (strain FGSC A4 / ATCC 38163 / CBS 112.46 / NRRL 194 / M139) (Aspergillus nidulans).